The sequence spans 212 residues: Pyrrolidone-carboxylate peptidase (212 aa).

Active-site residues include glutamate 78, cysteine 141, and histidine 165.

The protein belongs to the peptidase C15 family. Homotetramer.

The protein localises to the cytoplasm. The catalysed reaction is Release of an N-terminal pyroglutamyl group from a polypeptide, the second amino acid generally not being Pro.. Functionally, removes 5-oxoproline from various penultimate amino acid residues except L-proline. The chain is Pyrrolidone-carboxylate peptidase from Staphylococcus aureus (strain NCTC 8325 / PS 47).